Consider the following 200-residue polypeptide: Holliday junction branch migration complex subunit RuvA (200 aa).

Residues 1 to 64 (MYAYFRGELI…EDLMQLYGFI (64 aa)) are domain I. The interval 65-143 (EEEERQLFLL…KLQQTRPGKT (79 aa)) is domain II. Positions 144 to 154 (AGAGSVASLSE) are flexible linker. The domain III stretch occupies residues 154-200 (EDALQALMTLGFSRASAQQAVTRALLSAENPGVEDIVREALQNIRNH).

It belongs to the RuvA family. As to quaternary structure, homotetramer. Forms an RuvA(8)-RuvB(12)-Holliday junction (HJ) complex. HJ DNA is sandwiched between 2 RuvA tetramers; dsDNA enters through RuvA and exits via RuvB. An RuvB hexamer assembles on each DNA strand where it exits the tetramer. Each RuvB hexamer is contacted by two RuvA subunits (via domain III) on 2 adjacent RuvB subunits; this complex drives branch migration. In the full resolvosome a probable DNA-RuvA(4)-RuvB(12)-RuvC(2) complex forms which resolves the HJ.

It is found in the cytoplasm. Its function is as follows. The RuvA-RuvB-RuvC complex processes Holliday junction (HJ) DNA during genetic recombination and DNA repair, while the RuvA-RuvB complex plays an important role in the rescue of blocked DNA replication forks via replication fork reversal (RFR). RuvA specifically binds to HJ cruciform DNA, conferring on it an open structure. The RuvB hexamer acts as an ATP-dependent pump, pulling dsDNA into and through the RuvAB complex. HJ branch migration allows RuvC to scan DNA until it finds its consensus sequence, where it cleaves and resolves the cruciform DNA. This is Holliday junction branch migration complex subunit RuvA from Prosthecochloris aestuarii (strain DSM 271 / SK 413).